We begin with the raw amino-acid sequence, 273 residues long: Large ribosomal subunit protein uL2cz/uL2cy (273 aa).

Disordered regions lie at residues 1–25 (MAKH…VKSN) and 225–253 (PVDH…YPAL).

Belongs to the universal ribosomal protein uL2 family. As to quaternary structure, part of the 50S ribosomal subunit.

The protein resides in the plastid. It is found in the chloroplast. This chain is Large ribosomal subunit protein uL2cz/uL2cy (rpl2-A), found in Triticum aestivum (Wheat).